A 479-amino-acid polypeptide reads, in one-letter code: Ribosomal RNA small subunit methyltransferase F (479 aa).

S-adenosyl-L-methionine contacts are provided by residues 125–131 (AAAPGSK), Glu149, Asp176, and Asp194. Catalysis depends on Cys247, which acts as the Nucleophile.

It belongs to the class I-like SAM-binding methyltransferase superfamily. RsmB/NOP family.

Its subcellular location is the cytoplasm. The enzyme catalyses cytidine(1407) in 16S rRNA + S-adenosyl-L-methionine = 5-methylcytidine(1407) in 16S rRNA + S-adenosyl-L-homocysteine + H(+). Functionally, specifically methylates the cytosine at position 1407 (m5C1407) of 16S rRNA. The protein is Ribosomal RNA small subunit methyltransferase F of Escherichia coli (strain SE11).